Here is a 60-residue protein sequence, read N- to C-terminus: Snake venom metalloproteinase bothrojaractivase (60 aa).

A Peptidase M12B domain is found at 1-60; sequence RYIELAVVADHGMFTKYRVHELVNTVNGFFRSKQDLIKVQKDKTLTSFGEWRERDLLPRI. Glu4 is a binding site for Ca(2+).

This sequence belongs to the venom metalloproteinase (M12B) family. P-I subfamily. As to quaternary structure, monomer. It depends on Zn(2+) as a cofactor. As to expression, expressed by the venom gland.

Its subcellular location is the secreted. Its activity is regulated as follows. Completely inhibited by EDTA and EGTA. Partially inhibited by serine proteinase inhibitors PMSF and benzamidine. Not inhibited by cysteine proteinase inhibitors mercury ions and E-64. Is active without cofactors, although the presence of low concentrations of calcium and zinc ions enhanced its ability to convert prothrombin (F2) into active thrombin. Functionally, prothrombin (F2) activator that is cofactor-independent. Also has fibrinolytic and fibrinogenolytic activity. It degrades the Aalpha-chain and more slowly the Bbeta-chain of fibrin and fibrinogen, while the gamma-chain is only partially and slowly affected. A dose-dependent procoagulant activity is shown in human plasma. The protein is Snake venom metalloproteinase bothrojaractivase of Bothrops jararaca (Jararaca).